Reading from the N-terminus, the 170-residue chain is Ureidoglycolate lyase 1 (170 aa).

It belongs to the ureidoglycolate lyase family. As to quaternary structure, homodimer. Ni(2+) is required as a cofactor.

It catalyses the reaction (S)-ureidoglycolate = urea + glyoxylate. The protein operates within nitrogen metabolism; (S)-allantoin degradation. Catalyzes the catabolism of the allantoin degradation intermediate (S)-ureidoglycolate, generating urea and glyoxylate. Involved in the utilization of allantoin as nitrogen source. This chain is Ureidoglycolate lyase 1, found in Rhizobium meliloti (strain 1021) (Ensifer meliloti).